The chain runs to 535 residues: CTP synthase (535 aa).

The tract at residues 1–267 (MTKFIFVTGG…DDIVIQRLQL (267 aa)) is amidoligase domain. Serine 13 contacts CTP. Serine 13 is a UTP binding site. 14-19 (SLGKGI) serves as a coordination point for ATP. Tyrosine 54 is an L-glutamine binding site. Aspartate 71 contributes to the ATP binding site. 2 residues coordinate Mg(2+): aspartate 71 and glutamate 141. Residues 148-150 (DIE), 188-193 (KTKPTQ), and lysine 224 each bind CTP. UTP-binding positions include 188–193 (KTKPTQ) and lysine 224. Position 240-242 (240-242 (RDA)) interacts with ATP. The 243-residue stretch at 293-535 (TIGLVGKYVS…VEAALNYQQK (243 aa)) folds into the Glutamine amidotransferase type-1 domain. Position 355 (glycine 355) interacts with L-glutamine. Cysteine 382 acts as the Nucleophile; for glutamine hydrolysis in catalysis. L-glutamine is bound by residues 383 to 386 (LGMQ), glutamate 406, and arginine 463. Residues histidine 508 and glutamate 510 contribute to the active site.

Belongs to the CTP synthase family. Homotetramer.

It carries out the reaction UTP + L-glutamine + ATP + H2O = CTP + L-glutamate + ADP + phosphate + 2 H(+). The enzyme catalyses L-glutamine + H2O = L-glutamate + NH4(+). The catalysed reaction is UTP + NH4(+) + ATP = CTP + ADP + phosphate + 2 H(+). The protein operates within pyrimidine metabolism; CTP biosynthesis via de novo pathway; CTP from UDP: step 2/2. Allosterically activated by GTP, when glutamine is the substrate; GTP has no effect on the reaction when ammonia is the substrate. The allosteric effector GTP functions by stabilizing the protein conformation that binds the tetrahedral intermediate(s) formed during glutamine hydrolysis. Inhibited by the product CTP, via allosteric rather than competitive inhibition. In terms of biological role, catalyzes the ATP-dependent amination of UTP to CTP with either L-glutamine or ammonia as the source of nitrogen. Regulates intracellular CTP levels through interactions with the four ribonucleotide triphosphates. The sequence is that of CTP synthase from Staphylococcus epidermidis (strain ATCC 35984 / DSM 28319 / BCRC 17069 / CCUG 31568 / BM 3577 / RP62A).